We begin with the raw amino-acid sequence, 482 residues long: ATP synthase subunit beta (482 aa).

161–168 (GGAGVGKT) lines the ATP pocket.

This sequence belongs to the ATPase alpha/beta chains family. As to quaternary structure, F-type ATPases have 2 components, CF(1) - the catalytic core - and CF(0) - the membrane proton channel. CF(1) has five subunits: alpha(3), beta(3), gamma(1), delta(1), epsilon(1). CF(0) has four main subunits: a(1), b(1), b'(1) and c(9-12).

Its subcellular location is the cellular thylakoid membrane. The enzyme catalyses ATP + H2O + 4 H(+)(in) = ADP + phosphate + 5 H(+)(out). Functionally, produces ATP from ADP in the presence of a proton gradient across the membrane. The catalytic sites are hosted primarily by the beta subunits. The protein is ATP synthase subunit beta of Microcystis aeruginosa (strain NIES-843 / IAM M-2473).